We begin with the raw amino-acid sequence, 258 residues long: NAD kinase (258 aa).

The active-site Proton acceptor is the Asp-44. Residues 44–45, 116–117, Asp-146, Ala-154, and 157–162 each bind NAD(+); these read DG, NE, and TAYNLS.

The protein belongs to the NAD kinase family. The cofactor is a divalent metal cation.

It localises to the cytoplasm. The enzyme catalyses NAD(+) + ATP = ADP + NADP(+) + H(+). Involved in the regulation of the intracellular balance of NAD and NADP, and is a key enzyme in the biosynthesis of NADP. Catalyzes specifically the phosphorylation on 2'-hydroxyl of the adenosine moiety of NAD to yield NADP. The chain is NAD kinase from Zymomonas mobilis subsp. mobilis (strain ATCC 31821 / ZM4 / CP4).